A 63-amino-acid polypeptide reads, in one-letter code: Conotoxin Vi5.1b (63 aa).

A signal peptide spans 1-22 (MLCVPVFIILFIIIPFAPTSES). Residues 23 to 50 (QPKTKEEVAKASVHDNAERTLQRLWNQS) constitute a propeptide that is removed on maturation. A Proline amide modification is found at Pro62.

The protein belongs to the conotoxin T superfamily. Post-translationally, contains 2 disulfide bonds that can be either 'C1-C3, C2-C4' or 'C1-C4, C2-C3', since these disulfide connectivities have been observed for conotoxins with cysteine framework V (for examples, see AC P0DQQ7 and AC P81755). Expressed by the venom duct.

The protein localises to the secreted. This chain is Conotoxin Vi5.1b, found in Conus virgo (Virgin cone).